The chain runs to 793 residues: Acetyl-CoA decarbonylase/synthase complex subunit alpha (793 aa).

C55, C58, C63, and C73 together coordinate [4Fe-4S] cluster. H96 provides a ligand contact to CO. [Ni-4Fe-4S] cluster is bound by residues H229, C257, and C309. 2 4Fe-4S ferredoxin-type domains span residues 393–422 (EQQFKDTLATCTECNQCAFVCPPHIRISEM) and 432–461 (EPFSSTYEVCVGCQRCEQTCPQEIPILKLY). [4Fe-4S] cluster contacts are provided by C403, C406, C409, C413, C441, C444, C447, and C451. [Ni-4Fe-4S] cluster-binding residues include C509, C538, and C573.

It belongs to the Ni-containing carbon monoxide dehydrogenase family. Heterotetramer of two alpha and two epsilon subunits. The ACDS complex is made up of alpha, epsilon, beta, gamma and delta subunits with a probable stoichiometry of (alpha(2)epsilon(2))(4)-beta(8)-(gamma(1)delta(1))(8). [4Fe-4S] cluster serves as cofactor. The cofactor is [Ni-4Fe-4S] cluster.

The catalysed reaction is CO + 2 oxidized [2Fe-2S]-[ferredoxin] + H2O = 2 reduced [2Fe-2S]-[ferredoxin] + CO2 + 2 H(+). Part of the ACDS complex that catalyzes the reversible cleavage of acetyl-CoA, allowing autotrophic growth from CO(2). The alpha-epsilon subcomponent functions as a carbon monoxide dehydrogenase. This Methanothrix soehngenii (Methanosaeta concilii) protein is Acetyl-CoA decarbonylase/synthase complex subunit alpha.